Reading from the N-terminus, the 40-residue chain is Photosystem II reaction center protein L (40 aa).

A helical membrane pass occupies residues 19–39 (SLFLGLLLVFVLGILFSSYFF).

Belongs to the PsbL family. In terms of assembly, PSII is composed of 1 copy each of membrane proteins PsbA, PsbB, PsbC, PsbD, PsbE, PsbF, PsbH, PsbI, PsbJ, PsbK, PsbL, PsbM, PsbT, PsbX, PsbY, PsbZ, Psb30/Ycf12, peripheral proteins PsbO, CyanoQ (PsbQ), PsbU, PsbV and a large number of cofactors. It forms dimeric complexes.

It is found in the cellular thylakoid membrane. Functionally, one of the components of the core complex of photosystem II (PSII). PSII is a light-driven water:plastoquinone oxidoreductase that uses light energy to abstract electrons from H(2)O, generating O(2) and a proton gradient subsequently used for ATP formation. It consists of a core antenna complex that captures photons, and an electron transfer chain that converts photonic excitation into a charge separation. This subunit is found at the monomer-monomer interface and is required for correct PSII assembly and/or dimerization. The polypeptide is Photosystem II reaction center protein L (Synechococcus elongatus (strain ATCC 33912 / PCC 7942 / FACHB-805) (Anacystis nidulans R2)).